Reading from the N-terminus, the 349-residue chain is UDP-3-O-acylglucosamine N-acyltransferase (349 aa).

Catalysis depends on histidine 246, which acts as the Proton acceptor.

It belongs to the transferase hexapeptide repeat family. LpxD subfamily. Homotrimer.

The catalysed reaction is a UDP-3-O-[(3R)-3-hydroxyacyl]-alpha-D-glucosamine + a (3R)-hydroxyacyl-[ACP] = a UDP-2-N,3-O-bis[(3R)-3-hydroxyacyl]-alpha-D-glucosamine + holo-[ACP] + H(+). Its pathway is bacterial outer membrane biogenesis; LPS lipid A biosynthesis. Its function is as follows. Catalyzes the N-acylation of UDP-3-O-acylglucosamine using 3-hydroxyacyl-ACP as the acyl donor. Is involved in the biosynthesis of lipid A, a phosphorylated glycolipid that anchors the lipopolysaccharide to the outer membrane of the cell. In Trichormus variabilis (strain ATCC 29413 / PCC 7937) (Anabaena variabilis), this protein is UDP-3-O-acylglucosamine N-acyltransferase.